A 406-amino-acid chain; its full sequence is Argininosuccinate synthase (406 aa).

Residues 10–18 (AYSGGLDTS) and alanine 37 contribute to the ATP site. Positions 88 and 93 each coordinate L-citrulline. An ATP-binding site is contributed by glycine 118. L-aspartate contacts are provided by threonine 120, asparagine 124, and aspartate 125. Asparagine 124 contributes to the L-citrulline binding site. Positions 128, 179, 188, 264, and 276 each coordinate L-citrulline.

Belongs to the argininosuccinate synthase family. Type 1 subfamily. As to quaternary structure, homotetramer.

It is found in the cytoplasm. The catalysed reaction is L-citrulline + L-aspartate + ATP = 2-(N(omega)-L-arginino)succinate + AMP + diphosphate + H(+). It participates in amino-acid biosynthesis; L-arginine biosynthesis; L-arginine from L-ornithine and carbamoyl phosphate: step 2/3. The protein is Argininosuccinate synthase of Dinoroseobacter shibae (strain DSM 16493 / NCIMB 14021 / DFL 12).